We begin with the raw amino-acid sequence, 247 residues long: MMNETRTTIDQDEIDRFSRIAAEWWNPKGKFRPLHQLNPTRLAYIREKICLAFNRDPVSLMPFENLKILDIGCGGGLLCEPMARLGAMVVGVDAAQTNIEVAKLHATQSDLSIDYRTTIAEALADKGEKFDIILNMEVVEHVADVNLFIAATAKMLKSQGVMFVSTLNRTWKAWGLAIVGAEYILRWLPKGTHDYKKFLKPQELKNLLSKNALTVIDEIGITYNPVNDSWNRSKDMDVNYLLLAKRP.

4 residues coordinate S-adenosyl-L-methionine: R41, G72, D93, and M136.

The protein belongs to the methyltransferase superfamily. UbiG/COQ3 family.

It catalyses the reaction a 3-demethylubiquinol + S-adenosyl-L-methionine = a ubiquinol + S-adenosyl-L-homocysteine + H(+). It carries out the reaction a 3-(all-trans-polyprenyl)benzene-1,2-diol + S-adenosyl-L-methionine = a 2-methoxy-6-(all-trans-polyprenyl)phenol + S-adenosyl-L-homocysteine + H(+). Its pathway is cofactor biosynthesis; ubiquinone biosynthesis. Its function is as follows. O-methyltransferase that catalyzes the 2 O-methylation steps in the ubiquinone biosynthetic pathway. The protein is Ubiquinone biosynthesis O-methyltransferase of Bartonella quintana (strain Toulouse) (Rochalimaea quintana).